The sequence spans 615 residues: Pre-hexon-linking protein IIIa (615 aa).

The interval 1–92 (MDPGLKPSSS…DLLIRVHKYN (92 aa)) is peripentonal hexon-tethering domain. Positions 124–238 (SNQVILNDFL…FTNENTFTPD (115 aa)) are binding to hexon-linking protein. S212 carries the post-translational modification Phosphoserine; by host. A Phosphothreonine; by host modification is found at T262. A compositionally biased stretch (basic and acidic residues) spans 400–409 (EREALEEAGP). 2 disordered regions span residues 400–473 (EREA…SVDS) and 528–615 (GERI…NGLK). Composition is skewed to low complexity over residues 419–430 (PSSSPQSSKIQS) and 451–460 (SVRSAPPSVS). Residue S451 is modified to Phosphoserine; by host. Basic and acidic residues predominate over residues 539–548 (RAEIERRRIA). The span at 557–570 (PSLSSESSAPSLSS) shows a compositional bias: low complexity. Residues 602-615 (GNPFDYLRPRNGLK) constitute a propeptide that is removed on maturation.

It belongs to the adenoviridae hexon-linking protein IIIa family. Interacts with hexon proteins; this interaction tethers the peripentonal hexons to hexons situated in the facet. Interacts with the penton protein (via N-terminus). Interacts with packaging protein 3; this interaction is required to promote correct genome packaging. Cleaved near the C-terminus by the viral protease during virion maturation to form the mature protein.

It is found in the virion. The protein resides in the host nucleus. Its function is as follows. Structural component of the virion that acts as a cement protein on the capsid exterior which mediates the interactions between the hexons, including the peripentonal hexons, and reaches all the way to the penton vertices. Two hexon linking proteins IIIa, one from each facet, stabilize the unique edge interface between a pair of facets. As the virus enters the host cell, hexon linking proteins IIIa are shed concomitant with virion acidification in the endosome. During virus assembly, seems to play a role in the serotype specificity of the packaging of viral DNA via its interaction with packaging protein 3. The sequence is that of Pre-hexon-linking protein IIIa from Snake adenovirus serotype 1 (SnAdV-1).